We begin with the raw amino-acid sequence, 520 residues long: Putative hydrolase Mb2247c (520 aa).

Positions 1 to 34 are cleaved as a signal peptide; that stretch reads MAAMWRRRPLSSALLSFGLLLGGLPLAAPPLAGA. A helical transmembrane segment spans residues 104-124; sequence FGALLVNPGGPGASAVDMVAA. In terms of domain architecture, AB hydrolase-1 spans 105–403; the sequence is GALLVNPGGP…APTPADPAAW (299 aa). The active-site Nucleophile is S232. The active site involves D461. H488 (proton donor) is an active-site residue.

The protein belongs to the peptidase S33 family.

Its subcellular location is the cell membrane. This Mycobacterium bovis (strain ATCC BAA-935 / AF2122/97) protein is Putative hydrolase Mb2247c.